A 221-amino-acid chain; its full sequence is NEDD4 family-interacting protein 1 (221 aa).

Position 2 is an N-acetylalanine (Ala-2). Residues 2–41 (ALALAALAAVEPACGTGYQQLQNEEEPGEREQTAGDAPPP) form an interaction with UBE2L3 region. The Cytoplasmic segment spans residues 2–116 (ALALAALAAV…ADQLRIGNDG (115 aa)). Residues 15 to 45 (CGTGYQQLQNEEEPGEREQTAGDAPPPYSSI) are disordered. Short sequence motifs (PPxY motif) lie at residues 39 to 42 (PPPY), 64 to 67 (PPSY), and 74 to 76 (PSY). Residues 42 to 76 (YSSISAESAAYFDYKDESGFPKPPSYNVATTLPSY) are interaction with ITCH. Residues 117–137 (IFMLTFFMAFLFNWIGFFLSF) traverse the membrane as a helical segment. Residues 138–143 (CLTTSA) are Extracellular-facing. A helical transmembrane segment spans residues 144–164 (AGRYGAISGFGLSLIKWILIV). The Cytoplasmic portion of the chain corresponds to 165-172 (RFSTYFPG). Residues 173–193 (YFDGQYWLWWVFLVLGFLLFL) traverse the membrane as a helical segment. The Extracellular segment spans residues 194-221 (RGFINYAKVRKMPETFSNLPRTRVLFIY).

As to quaternary structure, forms heterodimers with NDFIP2. Interacts with several E3 ubiquitin-protein ligases, including ITCH, NEDD4, NEDD4L and WWP2. The interaction with NEDD4, NEDD4L and ITCH leads to relocalization of these proteins to exosomes and eventually to exosomal secretion. Interacts with SR1402. Interacts with SLC11A2/DMT1. Interacts with PTEN. May interact with phosphorylated EGFR. Interacts with BRAT1. Interacts with KCNH2. Interacts with MAVS. Part of a complex containing ITCH, NDFIP1 and MAP3K7. Interacts (via N-terminus) with UBE2L3; the interaction mediates recruitment of UBE2L3 to ITCH. In terms of processing, ubiquitinated by NEDD4; mono-, di- and polyubiquitinated forms are detected. Ubiquitination regulates its degradation. Undergoes transient tyrosine phosphorylation following EGF stimulation, most probably by catalyzed by SRC. Phosphorylation SRC is enhanced in the presence of NDFIP2 which may act as a scaffold to recruit SRC to NDFIP1.

It localises to the endosome membrane. The protein resides in the golgi apparatus membrane. Its subcellular location is the synapse. It is found in the synaptosome. The protein localises to the cell projection. It localises to the dendrite. The protein resides in the secreted. Functionally, activates HECT domain-containing E3 ubiquitin-protein ligases, including NEDD4 and ITCH, and consequently modulates the stability of their targets. As a result, controls many cellular processes. Prevents chronic T-helper cell-mediated inflammation by activating ITCH and thus controlling JUNB degradation. Promotes pancreatic beta cell death through degradation of JUNB and inhibition of the unfolded protein response, leading to reduction of insulin secretion. Restricts the production of pro-inflammatory cytokines in effector Th17 T-cells by promoting ITCH-mediated ubiquitination degradation of RORC. Together with NDFIP2, limits the cytokine signaling and expansion of effector Th2 T-cells by promoting degradation of JAK1, probably by ITCH- and NEDD4L-mediated ubiquitination. Regulates peripheral T-cell tolerance to self and foreign antigens, forcing the exit of naive CD4+ T-cells from the cell cycle before they become effector T-cells. Negatively regulates RLR-mediated antiviral response by promoting SMURF1-mediated ubiquitination and subsequent degradation of MAVS. Negatively regulates KCNH2 potassium channel activity by decreasing its cell-surface expression and interfering with channel maturation through recruitment of NEDD4L to the Golgi apparatus where it mediates KCNH2 degradation. In cortical neurons, mediates the ubiquitination of the divalent metal transporter SLC11A2/DMT1 by NEDD4L, leading to its down-regulation and protection of the cells from cobalt and iron toxicity. Important for normal development of dendrites and dendritic spines in cortex. Enhances the ubiquitination of BRAT1 mediated by: NEDD4, NEDD4L and ITCH and is required for the nuclear localization of ubiquitinated BRAT1. Enhances the ITCH-mediated ubiquitination of MAP3K7 by recruiting E2 ubiquitin-conjugating enzyme UBE2L3 to ITCH. Modulates EGFR signaling through multiple pathways. In particular, may regulate the ratio of AKT1-to-MAPK8 signaling in response to EGF, acting on AKT1 probably through PTEN destabilization and on MAPK8 through ITCH-dependent MAP2K4 inactivation. As a result, may control cell growth rate. Inhibits cell proliferation by promoting PTEN nuclear localization and changing its signaling specificity. This is NEDD4 family-interacting protein 1 (Ndfip1) from Rattus norvegicus (Rat).